Reading from the N-terminus, the 237-residue chain is 1-(5-phosphoribosyl)-5-[(5-phosphoribosylamino)methylideneamino] imidazole-4-carboxamide isomerase (237 aa).

Asp8 serves as the catalytic Proton acceptor. The Proton donor role is filled by Asp129.

It belongs to the HisA/HisF family.

The protein resides in the cytoplasm. It carries out the reaction 1-(5-phospho-beta-D-ribosyl)-5-[(5-phospho-beta-D-ribosylamino)methylideneamino]imidazole-4-carboxamide = 5-[(5-phospho-1-deoxy-D-ribulos-1-ylimino)methylamino]-1-(5-phospho-beta-D-ribosyl)imidazole-4-carboxamide. The protein operates within amino-acid biosynthesis; L-histidine biosynthesis; L-histidine from 5-phospho-alpha-D-ribose 1-diphosphate: step 4/9. The chain is 1-(5-phosphoribosyl)-5-[(5-phosphoribosylamino)methylideneamino] imidazole-4-carboxamide isomerase from Alkaliphilus metalliredigens (strain QYMF).